The following is a 244-amino-acid chain: Triosephosphate isomerase (244 aa).

9-11 contributes to the substrate binding site; the sequence is NWK. His-93 functions as the Electrophile in the catalytic mechanism. Glu-160 functions as the Proton acceptor in the catalytic mechanism. Positions 166 and 206 each coordinate substrate.

This sequence belongs to the triosephosphate isomerase family. Homodimer.

It localises to the cytoplasm. It carries out the reaction D-glyceraldehyde 3-phosphate = dihydroxyacetone phosphate. Its pathway is carbohydrate biosynthesis; gluconeogenesis. The protein operates within carbohydrate degradation; glycolysis; D-glyceraldehyde 3-phosphate from glycerone phosphate: step 1/1. Involved in the gluconeogenesis. Catalyzes stereospecifically the conversion of dihydroxyacetone phosphate (DHAP) to D-glyceraldehyde-3-phosphate (G3P). This is Triosephosphate isomerase from Mycoplasma pneumoniae (strain ATCC 29342 / M129 / Subtype 1) (Mycoplasmoides pneumoniae).